A 179-amino-acid chain; its full sequence is MSRIAKQPIVIPSDVSITLIGQMVIVKGSKGELKRLIHDSVLVKSVKSCLVFSSRINSSVKGWAQAGTARSLVNSMIHGVTVGFFKKLKLFGVGYRISINSSKNLNMSLGYSHIIEYVLPFGIFVESISQAEIIVKGINKQLVGQVAANLRAYRKSEPYKGKGIRYSNEIVRVKEAKKK.

The protein belongs to the universal ribosomal protein uL6 family. In terms of assembly, part of the 50S ribosomal subunit.

In terms of biological role, this protein binds to the 23S rRNA, and is important in its secondary structure. It is located near the subunit interface in the base of the L7/L12 stalk, and near the tRNA binding site of the peptidyltransferase center. The protein is Large ribosomal subunit protein uL6 of Buchnera aphidicola subsp. Baizongia pistaciae (strain Bp).